The following is a 184-amino-acid chain: ATP synthase subunit b, chloroplastic (184 aa).

Residues 27-49 (LATNLINLSVVLGVLIFFGKGVL) form a helical membrane-spanning segment.

It belongs to the ATPase B chain family. In terms of assembly, F-type ATPases have 2 components, F(1) - the catalytic core - and F(0) - the membrane proton channel. F(1) has five subunits: alpha(3), beta(3), gamma(1), delta(1), epsilon(1). F(0) has four main subunits: a(1), b(1), b'(1) and c(10-14). The alpha and beta chains form an alternating ring which encloses part of the gamma chain. F(1) is attached to F(0) by a central stalk formed by the gamma and epsilon chains, while a peripheral stalk is formed by the delta, b and b' chains.

The protein localises to the plastid. It localises to the chloroplast thylakoid membrane. Its function is as follows. F(1)F(0) ATP synthase produces ATP from ADP in the presence of a proton or sodium gradient. F-type ATPases consist of two structural domains, F(1) containing the extramembraneous catalytic core and F(0) containing the membrane proton channel, linked together by a central stalk and a peripheral stalk. During catalysis, ATP synthesis in the catalytic domain of F(1) is coupled via a rotary mechanism of the central stalk subunits to proton translocation. Component of the F(0) channel, it forms part of the peripheral stalk, linking F(1) to F(0). This Lactuca sativa (Garden lettuce) protein is ATP synthase subunit b, chloroplastic.